The chain runs to 221 residues: UPF0328 protein ECU11_2110 (221 aa).

The protein belongs to the UPF0328 family.

The chain is UPF0328 protein ECU11_2110 from Encephalitozoon cuniculi (strain GB-M1) (Microsporidian parasite).